Consider the following 179-residue polypeptide: Large ribosomal subunit protein uL5 (179 aa).

It belongs to the universal ribosomal protein uL5 family. In terms of assembly, part of the 50S ribosomal subunit; part of the 5S rRNA/L5/L18/L25 subcomplex. Contacts the 5S rRNA and the P site tRNA. Forms a bridge to the 30S subunit in the 70S ribosome.

In terms of biological role, this is one of the proteins that bind and probably mediate the attachment of the 5S RNA into the large ribosomal subunit, where it forms part of the central protuberance. In the 70S ribosome it contacts protein S13 of the 30S subunit (bridge B1b), connecting the 2 subunits; this bridge is implicated in subunit movement. Contacts the P site tRNA; the 5S rRNA and some of its associated proteins might help stabilize positioning of ribosome-bound tRNAs. The polypeptide is Large ribosomal subunit protein uL5 (Paramagnetospirillum magneticum (strain ATCC 700264 / AMB-1) (Magnetospirillum magneticum)).